A 437-amino-acid polypeptide reads, in one-letter code: O-antigen export system ATP-binding protein RfbB (437 aa).

An ABC transporter domain is found at 37-256 (LRGKRQSRDA…YREAISLAEA (220 aa)). An ATP-binding site is contributed by 69-76 (GRNGSGKS).

Belongs to the ABC transporter superfamily.

It localises to the cell inner membrane. In terms of biological role, may form an ATP-driven O-antigen export apparatus, in association with RfbA. This chain is O-antigen export system ATP-binding protein RfbB (rfbB), found in Myxococcus xanthus.